A 238-amino-acid polypeptide reads, in one-letter code: ATP synthase subunit a (238 aa).

5 helical membrane-spanning segments follow: residues 18–38 (MSTVLMTTIACLIVFLITFIG), 76–96 (FIVLAYALLFYVFVANMLGLP), 117–137 (VLTLTMAAFVVILTHYYGIKI), 195–215 (LIGMFGAFLPLIVWQAFGLFI), and 216–236 (GAIQAYIFAMLAMVYMAHKVE).

It belongs to the ATPase A chain family. As to quaternary structure, F-type ATPases have 2 components, CF(1) - the catalytic core - and CF(0) - the membrane proton channel. CF(1) has five subunits: alpha(3), beta(3), gamma(1), delta(1), epsilon(1). CF(0) has three main subunits: a(1), b(2) and c(9-12). The alpha and beta chains form an alternating ring which encloses part of the gamma chain. CF(1) is attached to CF(0) by a central stalk formed by the gamma and epsilon chains, while a peripheral stalk is formed by the delta and b chains.

It is found in the cell membrane. Its function is as follows. Key component of the proton channel; it plays a direct role in the translocation of protons across the membrane. The sequence is that of ATP synthase subunit a from Alkalihalophilus pseudofirmus (strain ATCC BAA-2126 / JCM 17055 / OF4) (Bacillus pseudofirmus).